A 60-amino-acid chain; its full sequence is MDDQVKMPTGPLKTCPICGKPAVQATHPFCSSRCRDVDLNRWLKGSYVIPGRDDEVDDVE.

Zn(2+) is bound by residues Cys15, Cys18, Cys30, and Cys34.

It belongs to the DNA gyrase inhibitor YacG family. As to quaternary structure, interacts with GyrB. Requires Zn(2+) as cofactor.

In terms of biological role, inhibits all the catalytic activities of DNA gyrase by preventing its interaction with DNA. Acts by binding directly to the C-terminal domain of GyrB, which probably disrupts DNA binding by the gyrase. This Bradyrhizobium diazoefficiens (strain JCM 10833 / BCRC 13528 / IAM 13628 / NBRC 14792 / USDA 110) protein is DNA gyrase inhibitor YacG.